The primary structure comprises 308 residues: Sulfoquinovosyl glycerol transport system permease protein SmoG (308 aa).

Transmembrane regions (helical) follow at residues leucine 28–valine 48, valine 92–leucine 112, serine 126–phenylalanine 146, glycine 164–tryptophan 184, isoleucine 223–alanine 243, and leucine 279–valine 299. In terms of domain architecture, ABC transmembrane type-1 spans threonine 88–tyrosine 300.

The protein belongs to the binding-protein-dependent transport system permease family. The complex is probably composed of two ATP-binding proteins (SmoE), two transmembrane proteins (SmoG and SmoH) and a solute-binding protein (SmoF).

The protein resides in the cell inner membrane. Functionally, part of the ABC transporter complex SmoEFGH involved in sulfoquinovosyl glycerol (SQGro) uptake. Responsible for the translocation of the substrate across the membrane. The polypeptide is Sulfoquinovosyl glycerol transport system permease protein SmoG (Agrobacterium fabrum (strain C58 / ATCC 33970) (Agrobacterium tumefaciens (strain C58))).